The following is a 536-amino-acid chain: DEAD-box ATP-dependent RNA helicase 26 (536 aa).

The interval 1-44 (MMSGGPSDATHRKRRRRRGPKGSGVDGPSIPRAVTTNGAGPEEE) is disordered. Positions 11–20 (HRKRRRRRGP) are enriched in basic residues. The Q motif signature appears at 74-102 (TRFDQCPVSPLSLKAIKDAGYEKMTQVQE). Residues 105-282 (LPIILQGEDV…HIAMKRGYKF (178 aa)) enclose the Helicase ATP-binding domain. 118–125 (AKTGTGKT) serves as a coordination point for ATP. The short motif at 230 to 233 (DEAD) is the DEAD box element. The region spanning 316–466 (VLKKHIAEDA…SIQTGVKDAL (151 aa)) is the Helicase C-terminal domain.

Belongs to the DEAD box helicase family.

It carries out the reaction ATP + H2O = ADP + phosphate + H(+). The polypeptide is DEAD-box ATP-dependent RNA helicase 26 (Oryza sativa subsp. japonica (Rice)).